The chain runs to 563 residues: Putative cysteine ligase BshC (563 aa).

Positions 493-518 (KEKTYRAGRRKHDELLQQLDKAELNL) form a coiled coil.

The protein belongs to the BshC family.

This chain is Putative cysteine ligase BshC, found in Chlorobaculum tepidum (strain ATCC 49652 / DSM 12025 / NBRC 103806 / TLS) (Chlorobium tepidum).